Here is a 156-residue protein sequence, read N- to C-terminus: ATP synthase subunit b (156 aa).

The helical transmembrane segment at 3–23 (ITFTIFAQSLAFAALIWIVAT) threads the bilayer.

It belongs to the ATPase B chain family. F-type ATPases have 2 components, F(1) - the catalytic core - and F(0) - the membrane proton channel. F(1) has five subunits: alpha(3), beta(3), gamma(1), delta(1), epsilon(1). F(0) has three main subunits: a(1), b(2) and c(10-14). The alpha and beta chains form an alternating ring which encloses part of the gamma chain. F(1) is attached to F(0) by a central stalk formed by the gamma and epsilon chains, while a peripheral stalk is formed by the delta and b chains.

Its subcellular location is the cell inner membrane. In terms of biological role, f(1)F(0) ATP synthase produces ATP from ADP in the presence of a proton or sodium gradient. F-type ATPases consist of two structural domains, F(1) containing the extramembraneous catalytic core and F(0) containing the membrane proton channel, linked together by a central stalk and a peripheral stalk. During catalysis, ATP synthesis in the catalytic domain of F(1) is coupled via a rotary mechanism of the central stalk subunits to proton translocation. Its function is as follows. Component of the F(0) channel, it forms part of the peripheral stalk, linking F(1) to F(0). The protein is ATP synthase subunit b of Xylella fastidiosa (strain 9a5c).